Here is a 202-residue protein sequence, read N- to C-terminus: P25 protein (202 aa).

A Flavodoxin-like domain is found at 7 to 195 (VAIVIYSTYG…EIARIQGETF (189 aa)). S181 carries the phosphoserine modification.

The protein belongs to the WrbA family. As to quaternary structure, homodimer.

Unknown. Target of pap1 transcription factor. Confers brefeldin A resistance in S.pombe. This chain is P25 protein (obr1), found in Schizosaccharomyces pombe (strain 972 / ATCC 24843) (Fission yeast).